We begin with the raw amino-acid sequence, 143 residues long: Large ribosomal subunit protein uL13 (143 aa).

This sequence belongs to the universal ribosomal protein uL13 family. In terms of assembly, part of the 50S ribosomal subunit.

Its function is as follows. This protein is one of the early assembly proteins of the 50S ribosomal subunit, although it is not seen to bind rRNA by itself. It is important during the early stages of 50S assembly. This chain is Large ribosomal subunit protein uL13, found in Rubrobacter xylanophilus (strain DSM 9941 / JCM 11954 / NBRC 16129 / PRD-1).